Reading from the N-terminus, the 166-residue chain is Cold-inducible RNA-binding protein (166 aa).

Residues 6–84 (GKLFVGGLNF…RQIRVDQAGK (79 aa)) form the RRM domain. Positions 68–166 (NGKSVDGRQI…DSYDSYTTQE (99 aa)) are disordered. The span at 93–120 (YRGGSSGGRGFFRGGRGRGGGGDRGYGG) shows a compositional bias: gly residues. Low complexity predominate over residues 121 to 166 (SSRFENRSGGYQSSGSRDYYGRSHGSYGDRSGGSYRDSYDSYTTQE).

Interacts with prmt1. Interacts with elavl1/elrA (via RRM3). Associates with ribosomes. Post-translationally, methylated on arginine residues within RGG motifs. Methylation by prmt1 promotes cytoplasmic accumulation.

It is found in the nucleus. It localises to the nucleoplasm. The protein resides in the cytoplasm. Functionally, cold-inducible mRNA binding protein. Acts cooperatively with elavl1/elrA to stabilize AU-rich element (ARE)-containing mRNAs by binding to themm and inhibiting their deadenylation. Essential for embryonic gastrulation and neural development, acting to maintain the expression of a set of adhesion molecules, and cell movement during embryogenesis. Required for pronephros development. In Xenopus tropicalis (Western clawed frog), this protein is Cold-inducible RNA-binding protein.